Here is a 256-residue protein sequence, read N- to C-terminus: Triosephosphate isomerase (256 aa).

A substrate-binding site is contributed by 12 to 14 (NWK). The active-site Electrophile is the histidine 99. The active-site Proton acceptor is the glutamate 169. Substrate contacts are provided by residues glycine 175, serine 214, and 235 to 236 (GG).

The protein belongs to the triosephosphate isomerase family. Homodimer.

Its subcellular location is the cytoplasm. The catalysed reaction is D-glyceraldehyde 3-phosphate = dihydroxyacetone phosphate. It functions in the pathway carbohydrate biosynthesis; gluconeogenesis. The protein operates within carbohydrate degradation; glycolysis; D-glyceraldehyde 3-phosphate from glycerone phosphate: step 1/1. In terms of biological role, involved in the gluconeogenesis. Catalyzes stereospecifically the conversion of dihydroxyacetone phosphate (DHAP) to D-glyceraldehyde-3-phosphate (G3P). The chain is Triosephosphate isomerase from Mesorhizobium japonicum (strain LMG 29417 / CECT 9101 / MAFF 303099) (Mesorhizobium loti (strain MAFF 303099)).